A 29-amino-acid chain; its full sequence is Small toxic protein ZorP (29 aa).

Residues 10–27 (VLIAVLELLVALLRLIDL) traverse the membrane as a helical segment.

Its subcellular location is the membrane. Functionally, toxic component of a type I toxin-antitoxin (TA) system. Overexpression leads to cell stasis and a decrease in colony-forming units. Probably repressed by cognate small RNA orzP. Base pairing occurs between 18 bases in the 5' UTR of zorP mRNA and the 5' end of OrzP sRNA. This chain is Small toxic protein ZorP, found in Escherichia coli O157:H7.